The primary structure comprises 452 residues: Gastrin/cholecystokinin type B receptor (452 aa).

The Extracellular segment spans residues Met-1–Thr-57. N-linked (GlcNAc...) asparagine glycans are attached at residues Asn-7, Asn-28, and Asn-34. The chain crosses the membrane as a helical span at residues Leu-58–Gly-78. Residues Leu-79–Leu-99 are Cytoplasmic-facing. A helical membrane pass occupies residues Leu-100 to Phe-120. Residues Gly-121–Ala-127 lie on the Extracellular side of the membrane. An intrachain disulfide couples Cys-125 to Cys-203. The chain crosses the membrane as a helical span at residues Val-128 to Leu-148. Topologically, residues Glu-149–Arg-171 are cytoplasmic. The helical transmembrane segment at Val-172–Ala-192 threads the bilayer. Over Val-193–Val-218 the chain is Extracellular. A helical membrane pass occupies residues Leu-219–Ile-239. At Ser-240–Met-339 the chain is on the cytoplasmic side. The interval Glu-256 to Glu-285 is disordered. Residues Ser-263–Gln-273 are compositionally biased toward gly residues. Residues Leu-340 to Trp-360 form a helical membrane-spanning segment. Residues Arg-361–Pro-376 lie on the Extracellular side of the membrane. A helical transmembrane segment spans residues Ile-377 to Phe-397. The Cytoplasmic segment spans residues Met-398–Gly-452. Cys-413 is lipidated: S-palmitoyl cysteine.

This sequence belongs to the G-protein coupled receptor 1 family.

It is found in the cell membrane. Receptor for gastrin and cholecystokinin. The CCK-B receptors occur throughout the central nervous system where they modulate anxiety, analgesia, arousal, and neuroleptic activity. This receptor mediates its action by association with G proteins that activate a phosphatidylinositol-calcium second messenger system. In Sus scrofa (Pig), this protein is Gastrin/cholecystokinin type B receptor.